Here is a 156-residue protein sequence, read N- to C-terminus: uncharacterized protein (156 aa).

The N-terminal stretch at 1-18 is a signal peptide; the sequence is MKKLLSIFLMAFSLNAFA. The Thioredoxin domain occupies 19–156; sequence QTNLADVQLK…AEQIRVFAEK (138 aa). A disulfide bond links cysteine 54 and cysteine 57.

Belongs to the thioredoxin family.

This is an uncharacterized protein from Haemophilus influenzae (strain ATCC 51907 / DSM 11121 / KW20 / Rd).